The following is a 212-amino-acid chain: Ribosome biogenesis protein RLP7 (212 aa).

The protein belongs to the universal ribosomal protein uL30 family.

It localises to the nucleus. The protein localises to the nucleolus. Involved in the biogenesis of the 60S ribosomal subunit. May act as a specificity factor that binds precursor rRNAs and tethers the enzymes that carry out the early 5' to 3' exonucleolytic reactions that generate the mature rRNAs. The protein is Ribosome biogenesis protein RLP7 (RLP7) of Cyberlindnera jadinii (Torula yeast).